The following is a 697-amino-acid chain: SITS-binding protein (697 aa).

Positions 1 to 20 (MARRAKKMASNSGDSSPEPG) are disordered. At 2 to 29 (ARRAKKMASNSGDSSPEPGIKEINETWK) the chain is on the cytoplasmic side. A helical transmembrane segment spans residues 30 to 50 (GAIACLGVALLFLMTIGVLYW). Asn-112, Asn-134, Asn-162, Asn-386, Asn-405, and Asn-470 each carry an N-linked (GlcNAc...) asparagine glycan. A run of 2 helical transmembrane segments spans residues 503–521 (GLIPSILHYSLLGYSFFIP) and 542–562 (WMQIATFLPVMSFSTPPWVFG). A glycan (N-linked (GlcNAc...) asparagine) is linked at Asn-568.

The protein belongs to the glycosyl hydrolase 31 family. Homodimer; disulfide-linked. As to expression, electroplax tissue, brain (200-fold less), and heart (500-fold less).

Its subcellular location is the membrane. Its function is as follows. This glycoprotein is probably not a functional part of the chloride channel. The sequence is that of SITS-binding protein from Tetronarce californica (Pacific electric ray).